We begin with the raw amino-acid sequence, 699 residues long: Polyribonucleotide nucleotidyltransferase (699 aa).

Residues aspartate 485 and aspartate 491 each coordinate Mg(2+). The 60-residue stretch at 552-611 (PRITTIKINPEKIRDVIGKGGAVIRALTEETGTTIELEDDGTVKIASNNGDATREAIRRI) folds into the KH domain. The S1 motif domain maps to 621 to 689 (GRLYTGKVIR…RQGRVRLSIK (69 aa)).

It belongs to the polyribonucleotide nucleotidyltransferase family. In terms of assembly, component of the RNA degradosome, which is a multiprotein complex involved in RNA processing and mRNA degradation. Mg(2+) serves as cofactor.

The protein localises to the cytoplasm. It carries out the reaction RNA(n+1) + phosphate = RNA(n) + a ribonucleoside 5'-diphosphate. In terms of biological role, involved in mRNA degradation. Catalyzes the phosphorolysis of single-stranded polyribonucleotides processively in the 3'- to 5'-direction. The polypeptide is Polyribonucleotide nucleotidyltransferase (Shewanella amazonensis (strain ATCC BAA-1098 / SB2B)).